The primary structure comprises 194 residues: uncharacterized protein (194 aa).

An HTH tetR-type domain is found at 2–62 (QGPRERMVVS…CEAVDYAGEH (61 aa)). The H-T-H motif DNA-binding region spans 25–44 (AISDVLQHSGAPRGSAYHYF).

This is an uncharacterized protein from Mycobacterium tuberculosis (strain CDC 1551 / Oshkosh).